We begin with the raw amino-acid sequence, 237 residues long: Protein lin-31 (237 aa).

The fork-head DNA-binding region spans 12–103 (QKPPYSYIWL…SGMFENGSCL (92 aa)). Disordered regions lie at residues 110–141 (RARGGQDDDDDDFHHPAPSKISRKNPLPLLPE) and 195–237 (NFES…ILSS). 2 stretches are compositionally biased toward low complexity: residues 206–216 (SEISGSGSSSS) and 227–237 (SSFSIESILSS).

The protein localises to the nucleus. Functionally, lin-31 regulates how vulval precursor cells choose their fate. It helps specify three alternative cell fates in vulval development. This chain is Protein lin-31 (lin-31), found in Caenorhabditis elegans.